The following is a 306-amino-acid chain: Porphobilinogen deaminase (306 aa).

Cys240 is subject to S-(dipyrrolylmethanemethyl)cysteine.

It belongs to the HMBS family. Monomer. Dipyrromethane serves as cofactor.

The enzyme catalyses 4 porphobilinogen + H2O = hydroxymethylbilane + 4 NH4(+). Its pathway is porphyrin-containing compound metabolism; protoporphyrin-IX biosynthesis; coproporphyrinogen-III from 5-aminolevulinate: step 2/4. In terms of biological role, tetrapolymerization of the monopyrrole PBG into the hydroxymethylbilane pre-uroporphyrinogen in several discrete steps. In Thiobacillus denitrificans (strain ATCC 25259 / T1), this protein is Porphobilinogen deaminase.